We begin with the raw amino-acid sequence, 124 residues long: Holo-[acyl-carrier-protein] synthase (124 aa).

2 residues coordinate Mg(2+): Asp-8 and Glu-56.

This sequence belongs to the P-Pant transferase superfamily. AcpS family. The cofactor is Mg(2+).

Its subcellular location is the cytoplasm. The catalysed reaction is apo-[ACP] + CoA = holo-[ACP] + adenosine 3',5'-bisphosphate + H(+). Its function is as follows. Transfers the 4'-phosphopantetheine moiety from coenzyme A to a Ser of acyl-carrier-protein. The sequence is that of Holo-[acyl-carrier-protein] synthase from Nitratidesulfovibrio vulgaris (strain DP4) (Desulfovibrio vulgaris).